We begin with the raw amino-acid sequence, 180 residues long: uncharacterized protein (180 aa).

This is an uncharacterized protein from Aquifex aeolicus (strain VF5).